Reading from the N-terminus, the 144-residue chain is Bacilliredoxin BT9727_3899 (144 aa).

Belongs to the bacilliredoxin family.

This is Bacilliredoxin BT9727_3899 from Bacillus thuringiensis subsp. konkukian (strain 97-27).